Reading from the N-terminus, the 110-residue chain is Iron-sulfur cluster assembly protein CyaY (110 aa).

Belongs to the frataxin family.

Its function is as follows. Involved in iron-sulfur (Fe-S) cluster assembly. May act as a regulator of Fe-S biogenesis. The chain is Iron-sulfur cluster assembly protein CyaY from Pseudomonas fluorescens (strain Pf0-1).